We begin with the raw amino-acid sequence, 156 residues long: ATP synthase subunit b (156 aa).

The chain crosses the membrane as a helical span at residues 7 to 27 (LIGQLIAFALFVAFCMKFVWP).

The protein belongs to the ATPase B chain family. F-type ATPases have 2 components, F(1) - the catalytic core - and F(0) - the membrane proton channel. F(1) has five subunits: alpha(3), beta(3), gamma(1), delta(1), epsilon(1). F(0) has three main subunits: a(1), b(2) and c(10-14). The alpha and beta chains form an alternating ring which encloses part of the gamma chain. F(1) is attached to F(0) by a central stalk formed by the gamma and epsilon chains, while a peripheral stalk is formed by the delta and b chains.

The protein resides in the cell inner membrane. Functionally, f(1)F(0) ATP synthase produces ATP from ADP in the presence of a proton or sodium gradient. F-type ATPases consist of two structural domains, F(1) containing the extramembraneous catalytic core and F(0) containing the membrane proton channel, linked together by a central stalk and a peripheral stalk. During catalysis, ATP synthesis in the catalytic domain of F(1) is coupled via a rotary mechanism of the central stalk subunits to proton translocation. In terms of biological role, component of the F(0) channel, it forms part of the peripheral stalk, linking F(1) to F(0). The protein is ATP synthase subunit b of Actinobacillus pleuropneumoniae serotype 7 (strain AP76).